The chain runs to 502 residues: Glycerol kinase (502 aa).

Threonine 14 provides a ligand contact to ADP. 3 residues coordinate ATP: threonine 14, threonine 15, and serine 16. Threonine 14 contributes to the sn-glycerol 3-phosphate binding site. Arginine 18 provides a ligand contact to ADP. Sn-glycerol 3-phosphate contacts are provided by arginine 84, glutamate 85, tyrosine 136, and aspartate 246. Arginine 84, glutamate 85, tyrosine 136, aspartate 246, and glutamine 247 together coordinate glycerol. The ADP site is built by threonine 268 and glycine 311. ATP is bound by residues threonine 268, glycine 311, glutamine 315, and glycine 412. ADP contacts are provided by glycine 412 and asparagine 416.

It belongs to the FGGY kinase family. Homotetramer and homodimer (in equilibrium). Heterodimer with EIIA-Glc. Binds 1 zinc ion per glycerol kinase EIIA-Glc dimer. The zinc ion is important for dimerization.

It carries out the reaction glycerol + ATP = sn-glycerol 3-phosphate + ADP + H(+). It participates in polyol metabolism; glycerol degradation via glycerol kinase pathway; sn-glycerol 3-phosphate from glycerol: step 1/1. Its activity is regulated as follows. Activity of this regulatory enzyme is affected by several metabolites. Allosterically and non-competitively inhibited by fructose 1,6-bisphosphate (FBP) and unphosphorylated phosphocarrier protein EIIA-Glc (III-Glc), an integral component of the bacterial phosphotransferase (PTS) system. Its function is as follows. Key enzyme in the regulation of glycerol uptake and metabolism. Catalyzes the phosphorylation of glycerol to yield sn-glycerol 3-phosphate. This is Glycerol kinase from Salmonella typhimurium (strain LT2 / SGSC1412 / ATCC 700720).